The primary structure comprises 67 residues: Large ribosomal subunit protein bL35 (67 aa).

This sequence belongs to the bacterial ribosomal protein bL35 family.

This chain is Large ribosomal subunit protein bL35, found in Bartonella henselae (strain ATCC 49882 / DSM 28221 / CCUG 30454 / Houston 1) (Rochalimaea henselae).